A 115-amino-acid polypeptide reads, in one-letter code: Large ribosomal subunit protein bL20 (115 aa).

It belongs to the bacterial ribosomal protein bL20 family.

In terms of biological role, binds directly to 23S ribosomal RNA and is necessary for the in vitro assembly process of the 50S ribosomal subunit. It is not involved in the protein synthesizing functions of that subunit. In Chlorobium luteolum (strain DSM 273 / BCRC 81028 / 2530) (Pelodictyon luteolum), this protein is Large ribosomal subunit protein bL20.